We begin with the raw amino-acid sequence, 398 residues long: Putative tyrosine-protein phosphatase C15H7.3 (398 aa).

The segment covering 1-15 has biased composition (basic residues); sequence MERSQKSARKKKKTS. The disordered stretch occupies residues 1-114; the sequence is MERSQKSARK…EPWSEEEPAK (114 aa). Residues 18 to 40 show a composition bias toward basic and acidic residues; that stretch reads GNDRSIRSERKSKQKKPAGEKSQ. The segment covering 41-50 has biased composition (basic residues); it reads KSRRTRKSRG. Residues 55–73 are compositionally biased toward polar residues; the sequence is GFTSRETIQPSSSGQSEGT. Residues 74-114 are compositionally biased toward basic and acidic residues; that stretch reads TRMDDQKDEKKDDKKEEKKEERKEEKKEEVKEPWSEEEPAK. A Tyrosine-protein phosphatase domain is found at 125–376; that stretch reads TNVGGTFKQT…GTVHRSMACW (252 aa).

Belongs to the protein-tyrosine phosphatase family. Non-receptor class subfamily.

It catalyses the reaction O-phospho-L-tyrosyl-[protein] + H2O = L-tyrosyl-[protein] + phosphate. This chain is Putative tyrosine-protein phosphatase C15H7.3, found in Caenorhabditis elegans.